The primary structure comprises 229 residues: uncharacterized protein (229 aa).

To M.pneumoniae MPN_376 central region.

This is an uncharacterized protein from Mycoplasma pneumoniae (strain ATCC 29342 / M129 / Subtype 1) (Mycoplasmoides pneumoniae).